The sequence spans 88 residues: Small ribosomal subunit protein bS20 (88 aa).

The span at 1–17 (MANIKSNEKRLRQDIKR) shows a compositional bias: basic and acidic residues. Residues 1 to 25 (MANIKSNEKRLRQDIKRNLNNKGQK) form a disordered region.

The protein belongs to the bacterial ribosomal protein bS20 family.

Binds directly to 16S ribosomal RNA. This Mycoplasma genitalium (strain ATCC 33530 / DSM 19775 / NCTC 10195 / G37) (Mycoplasmoides genitalium) protein is Small ribosomal subunit protein bS20.